The chain runs to 337 residues: ATP-dependent 6-phosphofructokinase (337 aa).

G11 contacts ATP. 21–25 contacts ADP; it reads RAVVR. Residues 72-73 and 102-105 contribute to the ATP site; these read RY and GDGS. Position 103 (D103) interacts with Mg(2+). 125–127 is a binding site for substrate; sequence TID. The active-site Proton acceptor is D127. Position 154 (R154) interacts with ADP. Substrate-binding positions include R162 and 169–171; that span reads MGR. ADP contacts are provided by residues 185–187, K212, and 214–216; these read GAD and KNH. Residues E223, R245, and 251–254 contribute to the substrate site; that span reads HILR.

The protein belongs to the phosphofructokinase type A (PFKA) family. ATP-dependent PFK group I subfamily. Prokaryotic clade 'B1' sub-subfamily. In terms of assembly, homotetramer. It depends on Mg(2+) as a cofactor.

Its subcellular location is the cytoplasm. The catalysed reaction is beta-D-fructose 6-phosphate + ATP = beta-D-fructose 1,6-bisphosphate + ADP + H(+). It participates in carbohydrate degradation; glycolysis; D-glyceraldehyde 3-phosphate and glycerone phosphate from D-glucose: step 3/4. Allosterically activated by ADP and other diphosphonucleosides, and allosterically inhibited by phosphoenolpyruvate. Functionally, catalyzes the phosphorylation of D-fructose 6-phosphate to fructose 1,6-bisphosphate by ATP, the first committing step of glycolysis. This is ATP-dependent 6-phosphofructokinase from Streptococcus pyogenes serotype M4 (strain MGAS10750).